A 108-amino-acid chain; its full sequence is Protein YcgL (108 aa).

Residues 12 to 96 (MFCVIYRSSK…PPEDLLKQHL (85 aa)) enclose the YcgL domain.

The protein is Protein YcgL of Escherichia coli (strain K12 / MC4100 / BW2952).